Consider the following 121-residue polypeptide: Small ribosomal subunit protein uS13 (121 aa).

Residues 96–121 (PVRGQNTKNNARTRKGKAVAIAGKKK) form a disordered region. Basic residues predominate over residues 106 to 121 (ARTRKGKAVAIAGKKK).

The protein belongs to the universal ribosomal protein uS13 family. In terms of assembly, part of the 30S ribosomal subunit. Forms a loose heterodimer with protein S19. Forms two bridges to the 50S subunit in the 70S ribosome.

Its function is as follows. Located at the top of the head of the 30S subunit, it contacts several helices of the 16S rRNA. In the 70S ribosome it contacts the 23S rRNA (bridge B1a) and protein L5 of the 50S subunit (bridge B1b), connecting the 2 subunits; these bridges are implicated in subunit movement. Contacts the tRNAs in the A and P-sites. The polypeptide is Small ribosomal subunit protein uS13 (Streptococcus pneumoniae serotype 4 (strain ATCC BAA-334 / TIGR4)).